A 67-amino-acid polypeptide reads, in one-letter code: UPF0519 protein C (67 aa).

The disordered stretch occupies residues 18–37 (KSQANLNSNSTNSPNNVQGL). Residues 22-33 (NLNSNSTNSPNN) show a composition bias toward low complexity.

Belongs to the UPF0519 family.

This chain is UPF0519 protein C, found in Dictyostelium discoideum (Social amoeba).